Consider the following 399-residue polypeptide: Acetate kinase (399 aa).

A Mg(2+)-binding site is contributed by Asn-9. Lys-16 lines the ATP pocket. A substrate-binding site is contributed by Arg-90. The active-site Proton donor/acceptor is Asp-147. ATP is bound by residues His-207–Gly-211, Asp-281–Arg-283, and Gly-333–Asn-337. Residue Glu-387 participates in Mg(2+) binding.

Belongs to the acetokinase family. In terms of assembly, homodimer. It depends on Mg(2+) as a cofactor. Mn(2+) serves as cofactor.

It localises to the cytoplasm. The enzyme catalyses acetate + ATP = acetyl phosphate + ADP. Its pathway is metabolic intermediate biosynthesis; acetyl-CoA biosynthesis; acetyl-CoA from acetate: step 1/2. Functionally, catalyzes the formation of acetyl phosphate from acetate and ATP. Can also catalyze the reverse reaction. The chain is Acetate kinase from Mycobacterium sp. (strain JLS).